Reading from the N-terminus, the 615-residue chain is Granule-bound starch synthase 1, chloroplastic/amyloplastic (615 aa).

The transit peptide at 1 to 70 (MAALVTSQLA…DRRCLSMVVR (70 aa)) directs the protein to the chloroplast. Lys-91 serves as a coordination point for ADP-alpha-D-glucose.

Belongs to the glycosyltransferase 1 family. Bacterial/plant glycogen synthase subfamily. As to expression, found in seeds and pollen.

The protein resides in the plastid. It is found in the chloroplast. The protein localises to the amyloplast. It carries out the reaction an NDP-alpha-D-glucose + [(1-&gt;4)-alpha-D-glucosyl](n) = [(1-&gt;4)-alpha-D-glucosyl](n+1) + a ribonucleoside 5'-diphosphate + H(+). Its pathway is glycan biosynthesis; starch biosynthesis. This is Granule-bound starch synthase 1, chloroplastic/amyloplastic (WAXY) from Triticum aestivum (Wheat).